We begin with the raw amino-acid sequence, 484 residues long: uncharacterized protein (484 aa).

The HTH gntR-type domain occupies 14–82 (VPLHRQIEQY…KGGGTKVVNS (69 aa)). A DNA-binding region (H-T-H motif) is located at residues 42-61 (QRTLADMFQVNRSTVTAAID). An N6-(pyridoxal phosphate)lysine modification is found at Lys-327.

This sequence in the C-terminal section; belongs to the class-I pyridoxal-phosphate-dependent aminotransferase family. It depends on pyridoxal 5'-phosphate as a cofactor.

This is an uncharacterized protein from Bacillus subtilis (strain 168).